A 296-amino-acid polypeptide reads, in one-letter code: Probable endonuclease 4 (296 aa).

His-69, His-109, Glu-160, Asp-194, His-197, His-231, Asp-244, His-246, and Glu-276 together coordinate Zn(2+).

Belongs to the AP endonuclease 2 family. Zn(2+) serves as cofactor.

It catalyses the reaction Endonucleolytic cleavage to 5'-phosphooligonucleotide end-products.. Endonuclease IV plays a role in DNA repair. It cleaves phosphodiester bonds at apurinic or apyrimidinic (AP) sites, generating a 3'-hydroxyl group and a 5'-terminal sugar phosphate. This chain is Probable endonuclease 4, found in Sulfurovum sp. (strain NBC37-1).